A 257-amino-acid polypeptide reads, in one-letter code: MKKIFVKPRELVVPGTLLAQGPFKNGRGTFREGNAIYSTVIGLVEIRGNVIRVIPLEGPYIPEVGDNVLGKIVDVKFSSWTVDIGAPYQASLRVQDAVEERIDLLKTDLRKIFDIGDIIYAKVKAFNEVNQIDLTTKGMPFKGGPLRGGQLVTITPSKVPRLIGKGGSMINMIKTLTGTRIIVGQNGWVWVSGKNDELERLAIEAILKVDRESHTQGLTDRVKEFLLSRLRELKEQGVIEEIPEVNGEEGGEDDGQA.

Residues 65-137 (GDNVLGKIVD…EVNQIDLTTK (73 aa)) enclose the S1 motif domain. Residues 147-206 (RGGQLVTITPSKVPRLIGKGGSMINMIKTLTGTRIIVGQNGWVWVSGKNDELERLAIEAI) form the KH domain.

It belongs to the RRP4 family. In terms of assembly, component of the archaeal exosome complex. Forms a trimer of Rrp4 and/or Csl4 subunits. The trimer associates with a hexameric ring-like arrangement composed of 3 Rrp41-Rrp42 heterodimers.

It localises to the cytoplasm. Its function is as follows. Non-catalytic component of the exosome, which is a complex involved in RNA degradation. Increases the RNA binding and the efficiency of RNA degradation. Confers strong poly(A) specificity to the exosome. The sequence is that of Exosome complex component Rrp4 from Thermococcus kodakarensis (strain ATCC BAA-918 / JCM 12380 / KOD1) (Pyrococcus kodakaraensis (strain KOD1)).